Reading from the N-terminus, the 472-residue chain is MHPGVLAAFLFLSWTRCWSLPVPNDDDDDDDMSEEDFQLAERYLKSYYYPLNPAGILKKTAANSVVDRLREMQSFFGLEVTGKLDDNTLDIMKKPRCGVPDVGEYNVFPRTLKWPKMNLTYRIVNYTPDLTHSEVEKAFKKAFKVWSDVTPLNFTRLYNGTADIMISFGTKEHGDFYPFDGPSGLLAHAFPPGPNYGGDAHFDDDETWTSSSKGYNLFLVAAHEFGHSLGLDHSKDPGALMFPIYTYTGKSHFVLPDDDVQGIQYLYGPGDEDPNPKHPKTPDKCDPSLSLDAITSLRGETMVFKDRFFWRLHPQLVDAELFLTKSFWPELPNRIDAAYEHPSKDLIFIFRGRKFWALNGYDILEGYPQKISELGFPKDVKKISAAVHFEDTGKTLFFSGNQVWRYDDTNRMMDKDYPRLIEEDFPGIGDKVDAVYEKNGYIYFFNGPIQFEYSIWSNRIVRVMPTNSLLWC.

Residues 1-19 (MHPGVLAAFLFLSWTRCWS) form the signal peptide. Residues 20 to 104 (LPVPNDDDDD…PRCGVPDVGE (85 aa)) constitute a propeptide, activation peptide. Residues 95-102 (PRCGVPDV) carry the Cysteine switch motif. Cysteine 97 contacts Zn(2+). Asparagine 118 carries an N-linked (GlcNAc...) asparagine glycan. Aspartate 129 contributes to the Ca(2+) binding site. Asparagine 153 and asparagine 159 each carry an N-linked (GlcNAc...) asparagine glycan. Aspartate 163 lines the Ca(2+) pocket. Residues histidine 173 and aspartate 175 each contribute to the Zn(2+) site. The interaction with TIMP2 stretch occupies residues 177 to 247 (YPFDGPSGLL…GALMFPIYTY (71 aa)). 4 residues coordinate Ca(2+): aspartate 180, glycine 181, serine 183, and leucine 185. Histidine 188 provides a ligand contact to Zn(2+). Asparagine 195, glycine 197, and aspartate 199 together coordinate Ca(2+). A Zn(2+)-binding site is contributed by histidine 201. Residues aspartate 203, aspartate 204, and glutamate 206 each contribute to the Ca(2+) site. Histidine 223 serves as a coordination point for Zn(2+). Residue glutamate 224 is part of the active site. Positions 227, 233, and 241 each coordinate Zn(2+). The interaction with collagen stretch occupies residues 269–472 (PGDEDPNPKH…VMPTNSLLWC (204 aa)). Hemopexin repeat units follow at residues 282–331 (PDKC…WPEL), 332–378 (PNRI…GFPK), 380–428 (VKKI…FPGI), and 429–472 (GDKV…LLWC). A disulfide bridge connects residues cysteine 285 and cysteine 472. Positions 292, 294, 336, and 338 each coordinate Ca(2+). Tyrosine 367 carries the phosphotyrosine; by PKDCC modification. The Ca(2+) site is built by serine 384, alanine 386, aspartate 433, and valine 435.

Belongs to the peptidase M10A family. Ca(2+) is required as a cofactor. Requires Zn(2+) as cofactor. The proenzyme is activated by removal of the propeptide; this cleavage can be effected by other matrix metalloproteinases, such as MMP2, MMP3 and MMP14 and may involve several cleavage steps. Cleavage can also be autocatalytic, after partial maturation by another protease or after treatment with 4-aminophenylmercuric acetate (APMA) (in vitro). In terms of processing, N-glycosylated. Post-translationally, tyrosine phosphorylated by PKDCC/VLK. In terms of tissue distribution, seems to be specific to breast carcinomas.

It is found in the secreted. Its subcellular location is the extracellular space. The protein localises to the extracellular matrix. Plays a role in the degradation of extracellular matrix proteins including fibrillar collagen, fibronectin, TNC and ACAN. Cleaves triple helical collagens, including type I, type II and type III collagen, but has the highest activity with soluble type II collagen. Can also degrade collagen type IV, type XIV and type X. May also function by activating or degrading key regulatory proteins, such as TGFB1 and CCN2. Plays a role in wound healing, tissue remodeling, cartilage degradation, bone development, bone mineralization and ossification. Required for normal embryonic bone development and ossification. Plays a role in the healing of bone fractures via endochondral ossification. Plays a role in wound healing, probably by a mechanism that involves proteolytic activation of TGFB1 and degradation of CCN2. Plays a role in keratinocyte migration during wound healing. May play a role in cell migration and in tumor cell invasion. The sequence is that of Collagenase 3 (MMP13) from Equus caballus (Horse).